A 278-amino-acid chain; its full sequence is NAD-capped RNA hydrolase NudC (278 aa).

Position 84 (Arg-84) interacts with substrate. 2 residues coordinate Zn(2+): Cys-114 and Cys-117. Glu-127 is a substrate binding site. Residues Cys-132 and Cys-135 each contribute to the Zn(2+) site. Tyr-140 lines the substrate pocket. The region spanning 141-265 is the Nudix hydrolase domain; the sequence is PRLSPSMIVL…IARHLIDLYL (125 aa). A divalent metal cation contacts are provided by Ala-174, Glu-190, and Glu-194. A Nudix box motif is present at residues 175 to 196; the sequence is GFVEAGESVEQCVVREVREEVG. A substrate-binding site is contributed by 208 to 215; it reads QNWPFPHS. Glu-235 lines the a divalent metal cation pocket. Residue Ala-257 coordinates substrate.

This sequence belongs to the Nudix hydrolase family. NudC subfamily. Homodimer. It depends on Mg(2+) as a cofactor. The cofactor is Mn(2+). Zn(2+) is required as a cofactor.

It catalyses the reaction a 5'-end NAD(+)-phospho-ribonucleoside in mRNA + H2O = a 5'-end phospho-adenosine-phospho-ribonucleoside in mRNA + beta-nicotinamide D-ribonucleotide + 2 H(+). It carries out the reaction NAD(+) + H2O = beta-nicotinamide D-ribonucleotide + AMP + 2 H(+). The enzyme catalyses NADH + H2O = reduced beta-nicotinamide D-ribonucleotide + AMP + 2 H(+). In terms of biological role, mRNA decapping enzyme that specifically removes the nicotinamide adenine dinucleotide (NAD) cap from a subset of mRNAs by hydrolyzing the diphosphate linkage to produce nicotinamide mononucleotide (NMN) and 5' monophosphate mRNA. The NAD-cap is present at the 5'-end of some mRNAs and stabilizes RNA against 5'-processing. Has preference for mRNAs with a 5'-end purine. Catalyzes the hydrolysis of a broad range of dinucleotide pyrophosphates. In Pseudomonas aeruginosa (strain LESB58), this protein is NAD-capped RNA hydrolase NudC.